The primary structure comprises 159 residues: Ribosomal RNA large subunit methyltransferase H (159 aa).

Positions 76 and 108 each coordinate S-adenosyl-L-methionine.

The protein belongs to the RNA methyltransferase RlmH family. In terms of assembly, homodimer.

The protein resides in the cytoplasm. It catalyses the reaction pseudouridine(1915) in 23S rRNA + S-adenosyl-L-methionine = N(3)-methylpseudouridine(1915) in 23S rRNA + S-adenosyl-L-homocysteine + H(+). In terms of biological role, specifically methylates the pseudouridine at position 1915 (m3Psi1915) in 23S rRNA. This chain is Ribosomal RNA large subunit methyltransferase H, found in Pediococcus pentosaceus (strain ATCC 25745 / CCUG 21536 / LMG 10740 / 183-1w).